The following is a 593-amino-acid chain: Arginine--tRNA ligase (593 aa).

The short motif at 123 to 133 is the 'HIGH' region element; that stretch reads PNVAKPMHVGH.

It belongs to the class-I aminoacyl-tRNA synthetase family. In terms of assembly, monomer.

The protein localises to the cytoplasm. It carries out the reaction tRNA(Arg) + L-arginine + ATP = L-arginyl-tRNA(Arg) + AMP + diphosphate. In Phenylobacterium zucineum (strain HLK1), this protein is Arginine--tRNA ligase.